The primary structure comprises 104 residues: UPF0145 protein TM1040_1243 (104 aa).

The protein belongs to the UPF0145 family.

This Ruegeria sp. (strain TM1040) (Silicibacter sp.) protein is UPF0145 protein TM1040_1243.